The following is a 248-amino-acid chain: Ribonuclease 3 (248 aa).

In terms of domain architecture, RNase III spans 16–145; it reads TEGLETSIGY…LLAAMYLDGG (130 aa). Mg(2+) is bound at residue glutamate 58. Residue aspartate 62 is part of the active site. Positions 131 and 134 each coordinate Mg(2+). Glutamate 134 is a catalytic residue. Residues 172-241 form the DRBM domain; sequence DFKTDFQELA…ARQCLERLET (70 aa).

It belongs to the ribonuclease III family. As to quaternary structure, homodimer. Mg(2+) serves as cofactor.

It localises to the cytoplasm. It catalyses the reaction Endonucleolytic cleavage to 5'-phosphomonoester.. Its function is as follows. Digests double-stranded RNA. Involved in the processing of primary rRNA transcript to yield the immediate precursors to the large and small rRNAs (23S and 16S). Processes some mRNAs, and tRNAs when they are encoded in the rRNA operon. Processes pre-crRNA and tracrRNA of type II CRISPR loci if present in the organism. In Geobacter sulfurreducens (strain ATCC 51573 / DSM 12127 / PCA), this protein is Ribonuclease 3.